The primary structure comprises 353 residues: Protein RecA (353 aa).

Position 64 to 71 (64 to 71 (GPESSGKT)) interacts with ATP. Residues 331–353 (LEEASAQKEEVPVEDKLFDDELE) form a disordered region. Positions 335–346 (SAQKEEVPVEDK) are enriched in basic and acidic residues.

The protein belongs to the RecA family.

The protein resides in the cytoplasm. Functionally, can catalyze the hydrolysis of ATP in the presence of single-stranded DNA, the ATP-dependent uptake of single-stranded DNA by duplex DNA, and the ATP-dependent hybridization of homologous single-stranded DNAs. It interacts with LexA causing its activation and leading to its autocatalytic cleavage. This chain is Protein RecA, found in Macrococcus caseolyticus (strain JCSC5402) (Macrococcoides caseolyticum).